We begin with the raw amino-acid sequence, 29 residues long: U-limacoditoxin(12)-Dv72 (29 aa).

The first 15 residues, 1 to 15 (MNFGMLKLLTVLIIC), serve as a signal peptide directing secretion. Residue asparagine 27 is modified to Asparagine amide.

Belongs to the limacoditoxin-12 family. Expressed by the venom secretory cell of the spine. The spine is a cuticular structure containing a single large nucleated venom-secreting cell at its base. It is an independent unit capable of producing, storing and injecting venom. On the back of D.vulnerans caterpillars, spines are grouped together by 50 to 100 to form scoli, of which there are eight in D.vulnerans.

It localises to the secreted. Its function is as follows. Probable toxin. Does not show insecticidal, antimicrobial and antiparasitic activities. Does not induce increase in intracellular calcium in mouse DRG neurons, suggesting that it does not induce pain. The sequence is that of U-limacoditoxin(12)-Dv72 from Doratifera vulnerans (Mottled cup moth).